A 438-amino-acid chain; its full sequence is 23S rRNA (uracil(1939)-C(5))-methyltransferase RlmD (438 aa).

Residues 10-69 (KASVNTKHLSVDVVRLDHNSAGIAFVDKKPVFIEGALPEEQAIIQFIEQKKQYSRAKLIK) enclose the TRAM domain. [4Fe-4S] cluster is bound by residues Cys82, Cys88, Cys91, and Cys169. Gln272, Phe301, Asn306, Glu322, Asn349, and Asp370 together coordinate S-adenosyl-L-methionine. The active-site Nucleophile is Cys396.

The protein belongs to the class I-like SAM-binding methyltransferase superfamily. RNA M5U methyltransferase family. RlmD subfamily.

The catalysed reaction is uridine(1939) in 23S rRNA + S-adenosyl-L-methionine = 5-methyluridine(1939) in 23S rRNA + S-adenosyl-L-homocysteine + H(+). Functionally, catalyzes the formation of 5-methyl-uridine at position 1939 (m5U1939) in 23S rRNA. The protein is 23S rRNA (uracil(1939)-C(5))-methyltransferase RlmD of Aliivibrio salmonicida (strain LFI1238) (Vibrio salmonicida (strain LFI1238)).